Here is a 796-residue protein sequence, read N- to C-terminus: Pathogenesis-related homeodomain protein (796 aa).

2 disordered regions span residues 34–57 (KKGK…EELC) and 80–99 (VKKT…KVEV). The segment covering 81–90 (KKTRKRKSKR) has biased composition (basic residues). A PHD-type zinc finger spans residues 190-247 (HIFCAECNSREAFPDNDIILCDGTCNRAFHQKCLDPPLETESIPPGDQGWFCKFCDCK). Disordered stretches follow at residues 282 to 347 (SEAT…STGS), 393 to 422 (LQEQ…STLV), and 511 to 736 (NRKT…TEEE). Positions 292 to 303 (WPSDDSKDDDYD) are enriched in acidic residues. A DNA-binding region (homeobox) is located at residues 452–511 (GGRRRMFRLPRNAVEKLRQVFAETELPSKAVRDRLAKELSLDPEKVNKWFKNTRYMALRN). 2 stretches are compositionally biased toward polar residues: residues 538–547 (ENNTETNEVQ) and 560–569 (ATNQNILSPC). Residues 570 to 580 (NNNQEEFQQEN) show a composition bias toward low complexity. Residues 581–600 (VSFPSPTDESQQYLEQNDSS) show a composition bias toward polar residues. A run of 4 repeats spans residues 605–631 (PHEK…MMKE), 632–658 (PHEE…MIEE), 659–685 (PHEE…MMEE), and 686–712 (PHDE…MTEE). Residues 605-735 (PHEKQSSEIS…KETGRKMTEE (131 aa)) are 5 X 27 AA tandem repeats. Basic and acidic residues-rich tracts occupy residues 624-636 (TESK…HEEL), 645-690 (AAEE…HDEL), and 700-733 (VEEK…RKMT). The stretch at 713–735 (SHEELSNEMSLEEKETGRKMTEE) is one 5; truncated repeat. The segment at 738-759 (LEAVMEMLCRTENKLLDVTQRL) is leucine-zipper.

It belongs to the PHD-associated homeobox family.

Its subcellular location is the nucleus. Specifically binds to the fungal elicitor-responsive DNA element, 5'-CTAATTGTTTA-3', of the gene PR2 promoter. In Arabidopsis thaliana (Mouse-ear cress), this protein is Pathogenesis-related homeodomain protein (PRH).